Consider the following 618-residue polypeptide: Uptake hydrogenase large subunit (618 aa).

Positions 75, 78, 597, and 600 each coordinate Ni(2+).

This sequence belongs to the [NiFe]/[NiFeSe] hydrogenase large subunit family. In terms of assembly, heterodimer of a large and a small subunit. Ni(2+) serves as cofactor.

Its subcellular location is the cell membrane. It catalyses the reaction H2 + A = AH2. In terms of biological role, this enzyme recycles the H(2) produced by nitrogenase to increase the production of ATP and to protect nitrogenase against inhibition or damage by O(2) under carbon- or phosphate-limited conditions. In Rubrivivax gelatinosus (Rhodocyclus gelatinosus), this protein is Uptake hydrogenase large subunit (hupB).